Consider the following 415-residue polypeptide: Zona pellucida-like domain-containing protein 1 (415 aa).

The first 19 residues, 1-19 (MEQIWLLLLLTIRVLPGSA), serve as a signal peptide directing secretion. The Extracellular portion of the chain corresponds to 20–372 (QFNGYNCDAN…PPFQLNAITS (353 aa)). Residues 43 to 320 (YCGVQAITMK…PICSHRERRD (278 aa)) form the ZP domain. Intrachain disulfides connect cysteine 44-cysteine 155 and cysteine 79-cysteine 104. Asparagine 121 and asparagine 164 each carry an N-linked (GlcNAc...) asparagine glycan. 2 cysteine pairs are disulfide-bonded: cysteine 235-cysteine 296 and cysteine 255-cysteine 313. Residues 323-360 (RRTTWSPQSSSGSAVLSAGPIITRSDETPTNNSQLGSP) form a disordered region. 2 stretches are compositionally biased toward polar residues: residues 325–336 (TTWSPQSSSGSA) and 350–359 (TPTNNSQLGS). Residues 373-393 (ALISGMVILGVTSFSLLLCSL) form a helical membrane-spanning segment. Over 394-415 (ALLHRKGPTSLVLNGIRNPVFD) the chain is Cytoplasmic.

Post-translationally, proteolytically cleaved before the transmembrane segment to yield the secreted form found in the extracellular matrix of the cupula. As to expression, detected in placenta, kidney, lung, pancreas and at very low level in other tissues.

It localises to the cytoplasmic vesicle membrane. The protein localises to the secreted. Its subcellular location is the extracellular space. The protein resides in the extracellular matrix. Glycoprotein which is a component of the gelatinous extracellular matrix in the cupulae of the vestibular organ. The chain is Zona pellucida-like domain-containing protein 1 (ZPLD1) from Homo sapiens (Human).